Reading from the N-terminus, the 245-residue chain is Probable transcriptional regulatory protein SUN_1622 (245 aa).

Belongs to the TACO1 family.

It localises to the cytoplasm. This is Probable transcriptional regulatory protein SUN_1622 from Sulfurovum sp. (strain NBC37-1).